We begin with the raw amino-acid sequence, 261 residues long: Glucosamine-6-phosphate deaminase (261 aa).

The active-site Proton acceptor; for enolization step is the aspartate 67. The active-site For ring-opening step is aspartate 136. Histidine 138 (proton acceptor; for ring-opening step) is an active-site residue. Catalysis depends on glutamate 143, which acts as the For ring-opening step.

It belongs to the glucosamine/galactosamine-6-phosphate isomerase family. NagB subfamily.

The enzyme catalyses alpha-D-glucosamine 6-phosphate + H2O = beta-D-fructose 6-phosphate + NH4(+). Its pathway is amino-sugar metabolism; N-acetylneuraminate degradation; D-fructose 6-phosphate from N-acetylneuraminate: step 5/5. In terms of biological role, catalyzes the reversible isomerization-deamination of glucosamine 6-phosphate (GlcN6P) to form fructose 6-phosphate (Fru6P) and ammonium ion. The chain is Glucosamine-6-phosphate deaminase from Streptomyces coelicolor (strain ATCC BAA-471 / A3(2) / M145).